A 338-amino-acid polypeptide reads, in one-letter code: Ketol-acid reductoisomerase (NADP(+)) (338 aa).

The KARI N-terminal Rossmann domain occupies 1–181 (MQVYYDKDCD…GGGRTGIIET (181 aa)). Residues 24 to 27 (YGSQ), Arg-47, Ser-50, Ser-52, and 82 to 85 (DEFQ) each bind NADP(+). The active site involves His-107. Residue Gly-133 coordinates NADP(+). The KARI C-terminal knotted domain maps to 182–327 (TFKDETETDL…EKLRSMMPWI (146 aa)). Positions 190, 194, 226, and 230 each coordinate Mg(2+). Ser-251 serves as a coordination point for substrate.

It belongs to the ketol-acid reductoisomerase family. Mg(2+) serves as cofactor.

It carries out the reaction (2R)-2,3-dihydroxy-3-methylbutanoate + NADP(+) = (2S)-2-acetolactate + NADPH + H(+). It catalyses the reaction (2R,3R)-2,3-dihydroxy-3-methylpentanoate + NADP(+) = (S)-2-ethyl-2-hydroxy-3-oxobutanoate + NADPH + H(+). Its pathway is amino-acid biosynthesis; L-isoleucine biosynthesis; L-isoleucine from 2-oxobutanoate: step 2/4. It participates in amino-acid biosynthesis; L-valine biosynthesis; L-valine from pyruvate: step 2/4. Its function is as follows. Involved in the biosynthesis of branched-chain amino acids (BCAA). Catalyzes an alkyl-migration followed by a ketol-acid reduction of (S)-2-acetolactate (S2AL) to yield (R)-2,3-dihydroxy-isovalerate. In the isomerase reaction, S2AL is rearranged via a Mg-dependent methyl migration to produce 3-hydroxy-3-methyl-2-ketobutyrate (HMKB). In the reductase reaction, this 2-ketoacid undergoes a metal-dependent reduction by NADPH to yield (R)-2,3-dihydroxy-isovalerate. In Hahella chejuensis (strain KCTC 2396), this protein is Ketol-acid reductoisomerase (NADP(+)).